The chain runs to 763 residues: Translation initiation factor IF-2 (763 aa).

The interval 52–178 (KQKKVQTSQN…KDEAIKHETK (127 aa)) is disordered. A compositionally biased stretch (basic and acidic residues) spans 65-82 (SNDENKKITNKNTEKTTE). Residues 86-96 (TVDSNKQNNSN) are compositionally biased toward polar residues. Basic and acidic residues-rich tracts occupy residues 105–116 (RNNDEESVSHFD) and 123–135 (KSEMNEKRDLNDK). A compositionally biased stretch (basic residues) spans 136-145 (KKNKNFKNTK). The segment covering 146 to 161 (NKNSNNNKNSKNNKNN) has biased composition (low complexity). Positions 162-178 (KNNDHNRKDEAIKHETK) are enriched in basic and acidic residues. A tr-type G domain is found at 265 to 434 (ERPPVITVMG…LMVAEMEELK (170 aa)). Residues 274-281 (GHVDHGKT) are G1. 274-281 (GHVDHGKT) provides a ligand contact to GTP. The G2 stretch occupies residues 299–303 (GITQH). Residues 320–323 (DTPG) form a G3 region. GTP-binding positions include 320-324 (DTPGH) and 374-377 (NKID). The segment at 374–377 (NKID) is G4. The interval 410–412 (SAR) is G5.

Belongs to the TRAFAC class translation factor GTPase superfamily. Classic translation factor GTPase family. IF-2 subfamily.

The protein resides in the cytoplasm. Its function is as follows. One of the essential components for the initiation of protein synthesis. Protects formylmethionyl-tRNA from spontaneous hydrolysis and promotes its binding to the 30S ribosomal subunits. Also involved in the hydrolysis of GTP during the formation of the 70S ribosomal complex. The sequence is that of Translation initiation factor IF-2 from Finegoldia magna (strain ATCC 29328 / DSM 20472 / WAL 2508) (Peptostreptococcus magnus).